Consider the following 122-residue polypeptide: HetP-like commitment protein Alr3234 (122 aa).

It belongs to the HetP family. As to quaternary structure, in bacterial two-hybrid assays interacts robustly with itself, Asl1930, Alr2902 and HetR and weakly with HetP.

Delays heterocyst differentiation and commitment when nitrogen is limiting. Interplay between the 4 HetP paralogs controls the timing of commitment to heterocyst formation and its duration. Epistatic analysis show that the 3 paralogs act upstream of hetP to delay commitment (asl1930, alr3234) or inhibit development (alr2902). Asl1930 and Alr3234 must also attenuate the activity of Alr2902. Ectopic expression does not complement a hetP deletion. This is HetP-like commitment protein Alr3234 from Nostoc sp. (strain PCC 7120 / SAG 25.82 / UTEX 2576).